A 176-amino-acid polypeptide reads, in one-letter code: Pituitary adenylate cyclase-activating polypeptide (176 aa).

Residues 1-24 form the signal peptide; the sequence is MTMCSGARLALLVYGILMHSSVYG. Positions 25 to 80 are excised as a propeptide; that stretch reads SPAASGLRFPGIRPENEAYDEDGNPQQDFYDSEPPGVGSPASALRDAYALYYPAEE. Disordered regions lie at residues 36–62 and 115–134; these read IRPE…PGVG and GTPG…RHSD. Residues 150-158 form an important for receptor binding region; that stretch reads VKKYLAAVL. Position 158 is a leucine amide (L158). Position 169 is a lysine amide (K169). Positions 173–176 are excised as a propeptide; that stretch reads IPYL.

This sequence belongs to the glucagon family.

It is found in the secreted. Functionally, PACAP is a neuropeptide involved in diverse array of physiological processes through activating the PACAP subfamily of class B1 G protein-coupled receptors: VIP receptor 1 (VIPR1), VIP receptor 2 (VIPR2), and PACAP type I receptor (ADCYAP1R1). Exerts neuroprotective and general cytoprotective effects due to anti-apoptotic, anti-inflammatory, and antioxidant actions. Promotes neuron projection development through the RAPGEF2/Rap1/B-Raf/ERK pathway. In chromaffin cells, induces long-lasting increase of intracellular calcium concentrations and neuroendocrine secretion. Involved in the control of glucose homeostasis, induces insulin secretion by pancreatic beta cells. PACAP exists in two bioactive forms from proteolysis of the same precursor protein, PACAP27 and PACAP38, which differ by eleven amino acid residues in the C-terminus. The chain is Pituitary adenylate cyclase-activating polypeptide (ADCYAP1) from Ovis aries (Sheep).